We begin with the raw amino-acid sequence, 234 residues long: Putative N-acetylmannosamine-6-phosphate 2-epimerase (234 aa).

This sequence belongs to the NanE family.

The enzyme catalyses an N-acyl-D-glucosamine 6-phosphate = an N-acyl-D-mannosamine 6-phosphate. It participates in amino-sugar metabolism; N-acetylneuraminate degradation; D-fructose 6-phosphate from N-acetylneuraminate: step 3/5. Converts N-acetylmannosamine-6-phosphate (ManNAc-6-P) to N-acetylglucosamine-6-phosphate (GlcNAc-6-P). This is Putative N-acetylmannosamine-6-phosphate 2-epimerase from Klebsiella pneumoniae (strain 342).